The primary structure comprises 236 residues: Proteasome subunit beta type-1 (236 aa).

The protein belongs to the peptidase T1B family. In terms of assembly, the 26S proteasome consists of a 20S proteasome core and two 19S regulatory subunits. The 20S proteasome core is composed of 28 subunits that are arranged in four stacked rings, resulting in a barrel-shaped structure. The two end rings are each formed by seven alpha subunits, and the two central rings are each formed by seven beta subunits. The catalytic chamber with the active sites is on the inside of the barrel.

Its subcellular location is the cytoplasm. It localises to the nucleus. In terms of biological role, non-catalytic component of the proteasome, a multicatalytic proteinase complex which is characterized by its ability to cleave peptides with Arg, Phe, Tyr, Leu, and Glu adjacent to the leaving group at neutral or slightly basic pH. The proteasome has an ATP-dependent proteolytic activity. The sequence is that of Proteasome subunit beta type-1 (psmB1) from Dictyostelium discoideum (Social amoeba).